The following is a 362-amino-acid chain: Dihydroorotate dehydrogenase (quinone) (362 aa).

FMN-binding positions include 62 to 66 and threonine 86; that span reads AGYDK. Residue lysine 66 participates in substrate binding. 111–115 contributes to the substrate binding site; sequence NRLGF. Residues asparagine 139 and asparagine 170 each coordinate FMN. Substrate is bound at residue asparagine 170. The active-site Nucleophile is serine 173. Asparagine 175 serves as a coordination point for substrate. FMN contacts are provided by lysine 215 and serine 243. 244 to 245 contributes to the substrate binding site; sequence NT. FMN is bound by residues glycine 266, glycine 295, and 316–317; that span reads YS.

It belongs to the dihydroorotate dehydrogenase family. Type 2 subfamily. In terms of assembly, monomer. FMN serves as cofactor.

It is found in the cell membrane. It catalyses the reaction (S)-dihydroorotate + a quinone = orotate + a quinol. It participates in pyrimidine metabolism; UMP biosynthesis via de novo pathway; orotate from (S)-dihydroorotate (quinone route): step 1/1. Functionally, catalyzes the conversion of dihydroorotate to orotate with quinone as electron acceptor. The protein is Dihydroorotate dehydrogenase (quinone) of Sinorhizobium fredii (strain NBRC 101917 / NGR234).